A 185-amino-acid chain; its full sequence is Ribosome-recycling factor (185 aa).

This sequence belongs to the RRF family.

The protein resides in the cytoplasm. Functionally, responsible for the release of ribosomes from messenger RNA at the termination of protein biosynthesis. May increase the efficiency of translation by recycling ribosomes from one round of translation to another. In Helicobacter pylori (strain Shi470), this protein is Ribosome-recycling factor.